Reading from the N-terminus, the 375-residue chain is Queuine tRNA-ribosyltransferase (375 aa).

D89 serves as the catalytic Proton acceptor. Substrate contacts are provided by residues 89 to 93 (DSGGF), D143, Q187, and G214. The RNA binding stretch occupies residues 245–251 (GVGKPED). Catalysis depends on D264, which acts as the Nucleophile. The RNA binding; important for wobble base 34 recognition stretch occupies residues 269-273 (TRNAR). Positions 302, 304, 307, and 333 each coordinate Zn(2+).

Belongs to the queuine tRNA-ribosyltransferase family. Homodimer. Within each dimer, one monomer is responsible for RNA recognition and catalysis, while the other monomer binds to the replacement base PreQ1. Requires Zn(2+) as cofactor.

It carries out the reaction 7-aminomethyl-7-carbaguanine + guanosine(34) in tRNA = 7-aminomethyl-7-carbaguanosine(34) in tRNA + guanine. It participates in tRNA modification; tRNA-queuosine biosynthesis. In terms of biological role, catalyzes the base-exchange of a guanine (G) residue with the queuine precursor 7-aminomethyl-7-deazaguanine (PreQ1) at position 34 (anticodon wobble position) in tRNAs with GU(N) anticodons (tRNA-Asp, -Asn, -His and -Tyr). Catalysis occurs through a double-displacement mechanism. The nucleophile active site attacks the C1' of nucleotide 34 to detach the guanine base from the RNA, forming a covalent enzyme-RNA intermediate. The proton acceptor active site deprotonates the incoming PreQ1, allowing a nucleophilic attack on the C1' of the ribose to form the product. After dissociation, two additional enzymatic reactions on the tRNA convert PreQ1 to queuine (Q), resulting in the hypermodified nucleoside queuosine (7-(((4,5-cis-dihydroxy-2-cyclopenten-1-yl)amino)methyl)-7-deazaguanosine). The polypeptide is Queuine tRNA-ribosyltransferase (Photobacterium profundum (strain SS9)).